The chain runs to 72 residues: Translation initiation factor IF-1 (72 aa).

Positions 1-72 (MAKEEVLEFP…TKGRITYRFK (72 aa)) constitute an S1-like domain.

Belongs to the IF-1 family. Component of the 30S ribosomal translation pre-initiation complex which assembles on the 30S ribosome in the order IF-2 and IF-3, IF-1 and N-formylmethionyl-tRNA(fMet); mRNA recruitment can occur at any time during PIC assembly.

The protein localises to the cytoplasm. Functionally, one of the essential components for the initiation of protein synthesis. Stabilizes the binding of IF-2 and IF-3 on the 30S subunit to which N-formylmethionyl-tRNA(fMet) subsequently binds. Helps modulate mRNA selection, yielding the 30S pre-initiation complex (PIC). Upon addition of the 50S ribosomal subunit IF-1, IF-2 and IF-3 are released leaving the mature 70S translation initiation complex. The protein is Translation initiation factor IF-1 of Brucella abortus (strain 2308).